A 258-amino-acid polypeptide reads, in one-letter code: Imidazole glycerol phosphate synthase subunit HisF (258 aa).

Residues aspartate 11 and aspartate 130 contribute to the active site.

This sequence belongs to the HisA/HisF family. As to quaternary structure, heterodimer of HisH and HisF.

The protein resides in the cytoplasm. The enzyme catalyses 5-[(5-phospho-1-deoxy-D-ribulos-1-ylimino)methylamino]-1-(5-phospho-beta-D-ribosyl)imidazole-4-carboxamide + L-glutamine = D-erythro-1-(imidazol-4-yl)glycerol 3-phosphate + 5-amino-1-(5-phospho-beta-D-ribosyl)imidazole-4-carboxamide + L-glutamate + H(+). The protein operates within amino-acid biosynthesis; L-histidine biosynthesis; L-histidine from 5-phospho-alpha-D-ribose 1-diphosphate: step 5/9. IGPS catalyzes the conversion of PRFAR and glutamine to IGP, AICAR and glutamate. The HisF subunit catalyzes the cyclization activity that produces IGP and AICAR from PRFAR using the ammonia provided by the HisH subunit. This Xanthobacter autotrophicus (strain ATCC BAA-1158 / Py2) protein is Imidazole glycerol phosphate synthase subunit HisF.